A 141-amino-acid polypeptide reads, in one-letter code: Small ribosomal subunit protein uS8c (141 aa).

This sequence belongs to the universal ribosomal protein uS8 family. Part of the 30S ribosomal subunit.

The protein localises to the plastid. It is found in the chloroplast. Functionally, one of the primary rRNA binding proteins, it binds directly to 16S rRNA central domain where it helps coordinate assembly of the platform of the 30S subunit. The chain is Small ribosomal subunit protein uS8c (rps8) from Chlamydomonas reinhardtii (Chlamydomonas smithii).